The primary structure comprises 284 residues: Small ribosomal subunit protein uS2 (284 aa).

Low complexity predominate over residues 250 to 272 (QELLAGATASPTAAGAAPGTPEA). The tract at residues 250 to 284 (QELLAGATASPTAAGAAPGTPEADIQTEPTAPQNP) is disordered.

This sequence belongs to the universal ribosomal protein uS2 family.

This is Small ribosomal subunit protein uS2 from Mycobacterium sp. (strain KMS).